The following is a 61-amino-acid chain: Alpha-conotoxine-like Am1.3 (61 aa).

The N-terminal stretch at 1–21 (MGMRMMFTVFLLVVLATTVVS) is a signal peptide. Positions 22 to 44 (FMSGRASHGRNAAASDLIALTIK) are excised as a propeptide. Cysteine amide is present on C60.

The protein belongs to the conotoxin A superfamily. In terms of processing, is not hydroxylated. Post-translationally, contains 2 disulfide bonds. Expressed by the venom duct.

The protein localises to the secreted. Its function is as follows. Alpha-conotoxins act on postsynaptic membranes, they bind to the nicotinic acetylcholine receptors (nAChR) and thus inhibit them. In Conus amadis (Amadis cone), this protein is Alpha-conotoxine-like Am1.3.